We begin with the raw amino-acid sequence, 1001 residues long: Protein MEI2-like 4 (1001 aa).

Residues His100–Ser120 form a disordered region. 2 RRM domains span residues Arg275–Pro348 and Gly360–Leu433. Disordered regions lie at residues Gly767–Tyr815 and Phe941–Asp1001. Basic and acidic residues predominate over residues Pro793–Asp803. The span at Asp978–Asp994 shows a compositional bias: polar residues.

Functionally, probable RNA-binding protein that may play a role in growth regulation. The polypeptide is Protein MEI2-like 4 (ML4) (Oryza sativa subsp. japonica (Rice)).